Reading from the N-terminus, the 92-residue chain is Large ribosomal subunit protein eL43 (92 aa).

Residues Cys39, Cys42, Cys57, and Cys60 each contribute to the Zn(2+) site. A C4-type zinc finger spans residues 39–60; that stretch reads CPNCGEDRVDRQGTGIWQCSYC.

This sequence belongs to the eukaryotic ribosomal protein eL43 family. Putative zinc-binding subfamily. As to quaternary structure, part of the 50S ribosomal subunit. Contacts protein L2. It depends on Zn(2+) as a cofactor.

Its function is as follows. Binds to the 23S rRNA. The sequence is that of Large ribosomal subunit protein eL43 from Haloarcula marismortui (strain ATCC 43049 / DSM 3752 / JCM 8966 / VKM B-1809) (Halobacterium marismortui).